The sequence spans 444 residues: MPPIVAIVGRPNVGKSTLFNRLTRGRRAITHDLPGVTRDRLEAPAEIEGRFVTLVDTGGMDYEAEESLARQIVEQAEAALVTADVVLFLVDGKAGRTALEDDLAERLRRLGKPVIVAVNKVDGLERVAAMTADFHAWGLPLLAISAAHGQGMAELAEAIAERLPEAEPYDPDAPLVQTVLRLAVLGRPNAGKSSLINALVGESRLIVSDIAGTTRDAVDVVVHQKGKRYLFVDTAGVRKRTRITDGLERYSVAKALSSAKRADVAVVVIDATGGVGVQDKRLISFLDSERKAFLVAVNKTDLVPQKDMLALQKDIARELRMCSHVPVLYMSAAKGKGVAKVLPQAEAIWAECQIRIGTGELNRAMRASLDKHQPPLVNGRRAKFYYLTQAADAPPTFVFFVSDTERVRDSYIKYLENSLRKLFGIATAPVKVVCRASHKPKDER.

EngA-type G domains follow at residues 3–167 (PIVA…PEAE) and 180–353 (LRLA…AECQ). GTP-binding positions include 9 to 16 (GRPNVGKS), 56 to 60 (DTGGM), 119 to 122 (NKVD), 186 to 193 (GRPNAGKS), 233 to 237 (DTAGV), and 298 to 301 (NKTD). The 85-residue stretch at 354–438 (IRIGTGELNR…PVKVVCRASH (85 aa)) folds into the KH-like domain.

It belongs to the TRAFAC class TrmE-Era-EngA-EngB-Septin-like GTPase superfamily. EngA (Der) GTPase family. Associates with the 50S ribosomal subunit.

Its function is as follows. GTPase that plays an essential role in the late steps of ribosome biogenesis. This is GTPase Der from Solidesulfovibrio magneticus (strain ATCC 700980 / DSM 13731 / RS-1) (Desulfovibrio magneticus).